The chain runs to 715 residues: Probable serine/threonine-protein kinase mkcE (715 aa).

Disordered regions lie at residues 1 to 125 (MQKI…SQHQ), 228 to 330 (QLQQ…TTTT), and 366 to 385 (GVDN…PIQP). A compositionally biased stretch (gly residues) spans 42–53 (YDGGGSGSGSGG). Low complexity-rich tracts occupy residues 54–70 (SSSN…TGGN) and 80–125 (SPSN…SQHQ). The stretch at 207 to 241 (TGKKNFQQQQLQQLQQQQQQQQLQQQQHQQHNHQI) forms a coiled coil. Residues 367–378 (VDNLSSTTTSLS) show a composition bias toward low complexity. The Protein kinase domain occupies 427-683 (RIGENAEVKG…PTQLLQHPFI (257 aa)). Residues 433–441 (EVKGAFGTV) and lysine 459 contribute to the ATP site. The active-site Proton acceptor is aspartate 550.

The protein belongs to the protein kinase superfamily. STE Ser/Thr protein kinase family. STE20 subfamily. It depends on Mg(2+) as a cofactor.

It catalyses the reaction L-seryl-[protein] + ATP = O-phospho-L-seryl-[protein] + ADP + H(+). It carries out the reaction L-threonyl-[protein] + ATP = O-phospho-L-threonyl-[protein] + ADP + H(+). The polypeptide is Probable serine/threonine-protein kinase mkcE (Dictyostelium discoideum (Social amoeba)).